Consider the following 415-residue polypeptide: Esterase FrsA (415 aa).

This sequence belongs to the FrsA family.

It catalyses the reaction a carboxylic ester + H2O = an alcohol + a carboxylate + H(+). Functionally, catalyzes the hydrolysis of esters. The polypeptide is Esterase FrsA (Yersinia pseudotuberculosis serotype O:1b (strain IP 31758)).